A 259-amino-acid chain; its full sequence is Cytosolic Fe-S cluster assembly factor Nubp2 homolog (259 aa).

14–21 (GKGGVGKS) provides a ligand contact to ATP. [4Fe-4S] cluster is bound by residues Cys188 and Cys191.

This sequence belongs to the Mrp/NBP35 ATP-binding proteins family. NUBP2/CFD1 subfamily. In terms of assembly, heterotetramer of 2 Nubp1 and 2 Nubp2 chains. It depends on [4Fe-4S] cluster as a cofactor.

The protein localises to the cytoplasm. Functionally, component of the cytosolic iron-sulfur (Fe/S) protein assembly (CIA) machinery. Required for maturation of extramitochondrial Fe-S proteins. The Nubp1-Nubp2 heterotetramer forms a Fe-S scaffold complex, mediating the de novo assembly of an Fe-S cluster and its transfer to target apoproteins. This Aedes aegypti (Yellowfever mosquito) protein is Cytosolic Fe-S cluster assembly factor Nubp2 homolog.